Reading from the N-terminus, the 792-residue chain is Carboxysome assembly protein CsoS2 (792 aa).

Over residues 1 to 15 (MAKQSSRELALERRK) the composition is skewed to basic and acidic residues. The segment at 1–235 (MAKQSSRELA…EISQRVRELR (235 aa)) is N-terminal domain. 3 disordered regions span residues 1-259 (MAKQ…RNGS), 280-299 (QVVTGTQANRSSKTTGNEAS), and 338-359 (HGNRVTGNEVGRSEKVTGDEPG). Residues 7–22 (RELALERRKALSNSGK) form an N-repeat 1 repeat. Polar residues-rich tracts occupy residues 17 to 36 (LSNSGKKSTTLNGSSPNRIR) and 69 to 82 (DTSFVASRESSGAS). One copy of the N-repeat 2 repeat lies at 94–109 (RELVLARRDELSRRGQ). Composition is skewed to basic and acidic residues over residues 97–106 (VLARRDELSR) and 113–126 (KSKDRTRAEVEKIS). A compositionally biased stretch (polar residues) spans 161 to 175 (DTVSRLSSRNSTSRP). N-repeat repeat units follow at residues 187 to 202 (RALVLARREAQSKHGK) and 225 to 240 (REISQRVRELRSKSGA). Positions 218 to 236 (GDPDLSSREISQRVRELRS) are enriched in basic and acidic residues. Positions 240–615 (ATGKKRSGAC…VQACGSDAPA (376 aa)) are middle region. 6 M-repeat repeats span residues 270-319 (KVGL…DTFC), 330-379 (KVAV…NQYC), 388-427 (KVGQSVTEDGRKVSGVMVGRSEKVTGDEAGSNRQLTGDQY), 441-490 (KVGS…NTFC), 500-549 (KVGL…SGWC), and 560-609 (RTPK…VQAC). 2 disordered regions span residues 608–662 (ACGS…GSQI) and 687–792 (HFKS…GARG). The segment at 616–792 (GSNDHQGSSE…LITVSGGARG (177 aa)) is C-terminal domain. Composition is skewed to polar residues over residues 618–636 (NDHQGSSESSPWTHFSVQS) and 651–662 (VTGTSYEQGSQI). 2 C-repeat repeats span residues 633-678 (SVQS…GTEQ) and 703-738 (TRPESRVTGEGQSAGLNITGDDWDRSERVTGTEGAS). The interval 763–792 (EVSQPMSRVTGSSGNTDQGSLITVSGGARG) is C-terminal peptide (CTP). Positions 764 to 785 (VSQPMSRVTGSSGNTDQGSLIT) are enriched in polar residues.

The protein belongs to the CsoS2 family. In terms of assembly, probably interacts with the carboxysome major shell protein CsoS1 via the N-terminal domain; this complex probably also interacts with RuBisCO. In terms of processing, has been suggested to undergo ribosomal frameshifting, as does its ortholog in H.neapolitanus. The exact position of the putative frameshift is not given, but it would probably occur in the sixth M-repeat and remove the C-terminus.

The protein localises to the carboxysome. In terms of biological role, required for alpha-carboxysome (Cb) assembly, mediates interaction between RuBisCO and the Cb shell. The protein is probably intrinsically disordered. The C-terminal repeats act as the encapsulation signal to target proteins to the Cb; they are necessary and sufficient to target both CsoS2 and foreign proteins to the Cb. The N-terminal repeats of this protein bind simultaneously to both subunits of RuBisCO. Probably also interacts with the major shell proteins (CsoS1); that interaction would increase the local concentration of CsoS2 so that it can condense RuBisCO and full carboxysomes can be formed. The chain is Carboxysome assembly protein CsoS2 from Prochlorococcus marinus (strain MIT 9313).